The chain runs to 258 residues: MTQHSRDTPQFYLTAPSPCPYLPGRHERKVFTHLVGGKAGELNDLLTHGGFRRSQSIAYRPACDQCRACVSVRVVANEFRASRGQRKILARNADVIGELRSAVPTSEQYSVFRAYLDRRHRHGGMADMTVLDYAMMVEDSHVKTRIIEYRRRGPDSGITGRGEDLLAVALTDILNDGLSMVYSFFEPGEDSRSLGTFMILDHIARARRLGLPYVYLGYWIEGSKKMDYKGRYLPQQRLAPSGWIRVDASGESAVEPQD.

The protein belongs to the R-transferase family. Bpt subfamily.

It is found in the cytoplasm. It carries out the reaction N-terminal L-glutamyl-[protein] + L-leucyl-tRNA(Leu) = N-terminal L-leucyl-L-glutamyl-[protein] + tRNA(Leu) + H(+). The enzyme catalyses N-terminal L-aspartyl-[protein] + L-leucyl-tRNA(Leu) = N-terminal L-leucyl-L-aspartyl-[protein] + tRNA(Leu) + H(+). Functions in the N-end rule pathway of protein degradation where it conjugates Leu from its aminoacyl-tRNA to the N-termini of proteins containing an N-terminal aspartate or glutamate. The chain is Aspartate/glutamate leucyltransferase from Rhodopseudomonas palustris (strain BisB18).